A 237-amino-acid polypeptide reads, in one-letter code: LexA repressor (237 aa).

A DNA-binding region (H-T-H motif) is located at residues 26-46; the sequence is FDEMKIALELTSKSGIHRLIT. Residues Ser158 and Lys196 each act as for autocatalytic cleavage activity in the active site.

Belongs to the peptidase S24 family. In terms of assembly, homodimer.

The enzyme catalyses Hydrolysis of Ala-|-Gly bond in repressor LexA.. Functionally, represses a number of genes involved in the response to DNA damage (SOS response), including recA and lexA. In the presence of single-stranded DNA, RecA interacts with LexA causing an autocatalytic cleavage which disrupts the DNA-binding part of LexA, leading to derepression of the SOS regulon and eventually DNA repair. This Bartonella quintana (strain Toulouse) (Rochalimaea quintana) protein is LexA repressor.